The following is a 521-amino-acid chain: Medium/long-chain-fatty-acid--[acyl-carrier-protein] ligase MbtM (521 aa).

Belongs to the ATP-dependent AMP-binding enzyme family.

The catalysed reaction is a long-chain fatty acid + holo-[ACP] + ATP = a long-chain fatty acyl-[ACP] + AMP + diphosphate. It catalyses the reaction a medium-chain fatty acid + holo-[ACP] + ATP = a medium-chain fatty acyl-[ACP] + AMP + diphosphate. Its pathway is siderophore biosynthesis; mycobactin biosynthesis. Activates lipidic moieties required for mycobactin biosynthesis. Converts medium- to long-chain aliphatic fatty acids into acyl adenylate, which is further transferred on to the phosphopantetheine arm of the carrier protein MbtL. The protein is Medium/long-chain-fatty-acid--[acyl-carrier-protein] ligase MbtM (mbtM) of Mycobacterium bovis (strain ATCC BAA-935 / AF2122/97).